Consider the following 841-residue polypeptide: Protein translocase subunit SecA (841 aa).

Residues 79–80 (MF), Q85, 103–107 (GEGKT), and D492 each bind ATP. The segment at 786–813 (REEVVQGQTTAHQPQEGDDNKKAKKAPV) is disordered. Residues C825, C827, C836, and C837 each contribute to the Zn(2+) site.

This sequence belongs to the SecA family. Part of the essential Sec protein translocation apparatus which comprises SecA, SecYEG and auxiliary proteins SecDF. Other proteins may be involved. Monomer and many different homodimers can be isolated, some of which are not formed in the presence of a synthetic signal peptide. A single SecA monomer interacts with SecY in the channel. Only shows some colocalization with FloA or FloT membrane assemblies. Zn(2+) is required as a cofactor.

The protein resides in the cell membrane. It localises to the cytoplasm. Its subcellular location is the membrane raft. It catalyses the reaction ATP + H2O + cellular proteinSide 1 = ADP + phosphate + cellular proteinSide 2.. Its function is as follows. Part of the Sec protein translocase complex. Interacts with the SecYEG preprotein conducting channel. Has a central role in coupling the hydrolysis of ATP to the transfer of proteins into and across the cell membrane, serving as an ATP-driven molecular motor driving the stepwise translocation of polypeptide chains across the membrane. This Bacillus subtilis (strain 168) protein is Protein translocase subunit SecA.